The following is a 332-amino-acid chain: Opticin (332 aa).

An N-terminal signal peptide occupies residues 1 to 19; it reads MRLLAFLSLLALVLQETGT. Residues 21-41 form a disordered region; sequence SLPRKERKRREEQMPREGDSF. Over residues 29–39 the composition is skewed to basic and acidic residues; sequence RREEQMPREGD. Residues Tyr-65 and Tyr-71 each carry the sulfotyrosine modification. The tract at residues 86–106 is disordered; it reads ATSISPAKSTTAPGTPSSNPT. The region spanning 116 to 153 is the LRRNT domain; the sequence is LLSSQPNHGLPTCLVCVCLGSSVYCDDIDLEDIPPLPR. Tyr-139 is subject to Sulfotyrosine. LRR repeat units lie at residues 154–175, 178–199, 202–223, 248–269, 270–290, and 300–320; these read RTAY…DFKG, KLKR…AFRL, ALQD…PSGI, KLQF…LPLS, LRSV…VFCD, and QLED…PSAY. A disulfide bond links Cys-289 and Cys-322. The N-linked (GlcNAc...) asparagine glycan is linked to Asn-312.

It belongs to the small leucine-rich proteoglycan (SLRP) family. SLRP class III subfamily. In terms of assembly, homodimer. In terms of processing, O-glycosylated. Proteolytically cleaved by MMP1, MMP2, MMP3, MMP7, MMP8, MMP9, ADAMTS4, and ADAMTS5. Proteolytically cleaved by MMP13. The degradation of OPTC by proteases may contribute to osteoarthritis pathophysiology. Post-translationally, sulfated on tyrosine residues. As to expression, expressed in cartilage and synovial membranes (at protein level). Expressed in the retina, iris, ligament, skin and fetal liver (at protein level). Expressed in the retinal pigment epithelium (at protein level). Expressed in synovial fibroblasts and subchondral bone osteoblasts.

The protein localises to the secreted. The protein resides in the extracellular space. It is found in the extracellular matrix. In terms of biological role, inhibits angiogenesis in the vitreous humor of the eye, and therefore represses neovascularization. Binds collagen fibrils. May be involved in collagen fiber organization via regulation of other members of the small leucine-rich repeat proteoglycan superfamily. The chain is Opticin (OPTC) from Homo sapiens (Human).